We begin with the raw amino-acid sequence, 479 residues long: Lysosomal protective protein (479 aa).

The first 27 residues, 1-27 (MFRAALWPPVLLLLQLLLLACAPGGEG), serve as a signal peptide directing secretion. 4 cysteine pairs are disulfide-bonded: Cys-87-Cys-361, Cys-239-Cys-255, Cys-240-Cys-245, and Cys-280-Cys-330. A glycan (N-linked (GlcNAc...) asparagine) is linked at Asn-144. Ser-177 is a catalytic residue. An N-linked (GlcNAc...) asparagine glycan is attached at Asn-332. Residues Asp-399 and His-456 contribute to the active site.

It belongs to the peptidase S10 family. As to quaternary structure, heterodimer of a 32 kDa chain and a 20 kDa chain; disulfide-linked.

Its subcellular location is the lysosome. It carries out the reaction Release of a C-terminal amino acid with broad specificity.. Protective protein appears to be essential for both the activity of beta-galactosidase and neuraminidase, it associates with these enzymes and exerts a protective function necessary for their stability and activity. This protein is also a carboxypeptidase and can deamidate tachykinins. This chain is Lysosomal protective protein (CTSA), found in Bos taurus (Bovine).